A 140-amino-acid chain; its full sequence is ATP synthase epsilon chain (140 aa).

This sequence belongs to the ATPase epsilon chain family. F-type ATPases have 2 components, CF(1) - the catalytic core - and CF(0) - the membrane proton channel. CF(1) has five subunits: alpha(3), beta(3), gamma(1), delta(1), epsilon(1). CF(0) has three main subunits: a, b and c.

The protein resides in the cell inner membrane. Functionally, produces ATP from ADP in the presence of a proton gradient across the membrane. This is ATP synthase epsilon chain from Vibrio vulnificus (strain CMCP6).